The sequence spans 193 residues: Putative manganese efflux pump MntP (193 aa).

6 consecutive transmembrane segments (helical) span residues 6-26 (VIFI…GIAC), 48-68 (AGMV…ISAF), 71-91 (WIAF…ALQG), 108-128 (LLGV…AFAV), 132-152 (NIGL…FLGF), and 165-185 (WVGV…LAEH).

This sequence belongs to the MntP (TC 9.B.29) family.

Its subcellular location is the cell membrane. Probably functions as a manganese efflux pump. This chain is Putative manganese efflux pump MntP, found in Dehalococcoides mccartyi (strain ATCC BAA-2100 / JCM 16839 / KCTC 5957 / BAV1).